A 382-amino-acid chain; its full sequence is Protein delta homolog 2 (382 aa).

The N-terminal stretch at 1-26 (MPSGCRCLNLVCLLCILGATSQPARA) is a signal peptide. 4 consecutive EGF-like domains span residues 27–58 (DDCSSHCDLAHGCCAPDGSCRCDPGWEGLHCE), 62–89 (RMPGCQHGTCHQPWQCICHSGWAGKFCD), 91–129 (DEHICTSQSPCQNGGQCVYDGGGEYHCVCLPGFRGRGCE), and 131–172 (KAGP…AHCE). At 27–305 (DDCSSHCDLA…RQEAGLGESS (279 aa)) the chain is on the extracellular side. 17 cysteine pairs are disulfide-bonded: Cys29-Cys40, Cys33-Cys46, Cys48-Cys57, Cys66-Cys71, Cys79-Cys88, Cys95-Cys107, Cys101-Cys117, Cys119-Cys128, Cys135-Cys148, Cys142-Cys160, Cys162-Cys171, Cys178-Cys189, Cys183-Cys198, Cys200-Cys209, Cys216-Cys227, Cys221-Cys236, and Cys238-Cys247. N-linked (GlcNAc...) asparagine glycosylation is present at Asn157. Residues 174-210 (NVDDCLMRPCANGATCIDGINRFSCLCPEGFAGRFCT) form the EGF-like 5; calcium-binding domain. The region spanning 212–248 (NLDDCASRPCQRGARCRDRVHDFDCLCPSGYGGKTCE) is the EGF-like 6; calcium-binding domain. A helical transmembrane segment spans residues 306–326 (LVALVVFGSLTAALVLATVLL). At 327 to 382 (TLRAWRRGICPTGPCCDPAPHYAPARQDQECQVSMLPAGFPLSPDLPPEPGKTTAL) the chain is on the cytoplasmic side.

Its subcellular location is the membrane. Functionally, regulates adipogenesis. The polypeptide is Protein delta homolog 2 (Dlk2) (Rattus norvegicus (Rat)).